We begin with the raw amino-acid sequence, 144 residues long: Deoxyuridine 5'-triphosphate nucleotidohydrolase (144 aa).

Substrate contacts are provided by residues 63 to 65 (RSG), asparagine 76, and 80 to 82 (TID).

It belongs to the dUTPase family. Mg(2+) is required as a cofactor.

The catalysed reaction is dUTP + H2O = dUMP + diphosphate + H(+). Its pathway is pyrimidine metabolism; dUMP biosynthesis; dUMP from dCTP (dUTP route): step 2/2. Its function is as follows. This enzyme is involved in nucleotide metabolism: it produces dUMP, the immediate precursor of thymidine nucleotides and it decreases the intracellular concentration of dUTP so that uracil cannot be incorporated into DNA. The polypeptide is Deoxyuridine 5'-triphosphate nucleotidohydrolase (Phocaeicola vulgatus (strain ATCC 8482 / DSM 1447 / JCM 5826 / CCUG 4940 / NBRC 14291 / NCTC 11154) (Bacteroides vulgatus)).